The following is a 306-amino-acid chain: MPIKLPDELPATEILAQENIFVMKDSRAFTQDIRPLRIVILNLMPVKETTETQLLRLLGNTPLQVEIVLLHMSSHTSKNTSEEHLSLFYKTFEEIRDQRFDGMIITGAPVEQLEFTDVTYWQELTEILDWKMENVTSTLHICWGAQAGLYHHFGVQKHPLPEKMFGIFPHTLNKQNVKLFRGFDNYFHIPHSRHTENRREDIEQVPELEILSESDEAGVYIVATRDGRQIFVTGHSEYDPTTLQDEYQRDVNKGLDIAVPRNYYPKDDPSREPIVTWRAHANLMFSNWLNYYVYQETPYDLNNDKR.

Residue Cys142 is the Acyl-thioester intermediate of the active site. 2 residues coordinate substrate: Lys163 and Ser192. The active-site Proton acceptor is the His235. Glu237 is a catalytic residue. Position 249 (Arg249) interacts with substrate.

The protein belongs to the MetA family.

It is found in the cytoplasm. The enzyme catalyses L-homoserine + acetyl-CoA = O-acetyl-L-homoserine + CoA. It participates in amino-acid biosynthesis; L-methionine biosynthesis via de novo pathway; O-acetyl-L-homoserine from L-homoserine: step 1/1. Transfers an acetyl group from acetyl-CoA to L-homoserine, forming acetyl-L-homoserine. The chain is Homoserine O-acetyltransferase from Brevibacillus brevis (strain 47 / JCM 6285 / NBRC 100599).